Consider the following 329-residue polypeptide: MTAQPQRIGFLLWPATRALTLSLAEEALRAARRLHPEALYEPLFLLAEAPAEEEGWRLPGTAWNGRLEQCSRLFLVADEAPAAVSPALGLALKQLARSGAAIGALSAGIYPLAQLGLLDGYRAAVHWRWHDDFTERFPKVIATNHLFEWDRDRMTACGGMAVLDLLLALLSRDHGAELAGAVSEELVVERIREGNERQRIPLKNRLGSSHPKLTQAVLLMEANIEEPLTTDEIAQHVCVSRRQLERIFKQYLNRVPSQYYLELRLNRARQMLMQTSKSIIQIGLSCGFSSGPHFSSAYRNFFGVTPREDRNQRRGGSAFETTFTPVERG.

Positions 214 to 312 (TQAVLLMEAN…GVTPREDRNQ (99 aa)) constitute an HTH araC/xylS-type domain. 2 DNA-binding regions (H-T-H motif) span residues 231–252 (DEIAQHVCVSRRQLERIFKQYL) and 279–302 (IIQIGLSCGFSSGPHFSSAYRNFF). The tract at residues 307–329 (REDRNQRRGGSAFETTFTPVERG) is disordered. The segment covering 319-329 (FETTFTPVERG) has biased composition (polar residues).

In terms of biological role, argR could be a transcriptional activator of the dauBAR operon in response to the presence of L-Arg. This chain is HTH-type transcriptional regulator ArgR (argR), found in Pseudomonas aeruginosa (strain ATCC 15692 / DSM 22644 / CIP 104116 / JCM 14847 / LMG 12228 / 1C / PRS 101 / PAO1).